We begin with the raw amino-acid sequence, 323 residues long: GTP 3',8-cyclase (323 aa).

Residues 4 to 228 (KYGRSIDYLR…VPVNIQNNGP (225 aa)) form the Radical SAM core domain. Arg-13 lines the GTP pocket. [4Fe-4S] cluster is bound by residues Cys-20 and Cys-24. Tyr-26 lines the S-adenosyl-L-methionine pocket. A [4Fe-4S] cluster-binding site is contributed by Cys-27. Arg-63 provides a ligand contact to GTP. Residue Gly-67 coordinates S-adenosyl-L-methionine. Thr-94 contacts GTP. Ser-118 serves as a coordination point for S-adenosyl-L-methionine. Lys-155 is a GTP binding site. Met-189 serves as a coordination point for S-adenosyl-L-methionine. Cys-252 and Cys-255 together coordinate [4Fe-4S] cluster. Residue 257–259 (RMR) coordinates GTP. Cys-269 provides a ligand contact to [4Fe-4S] cluster.

This sequence belongs to the radical SAM superfamily. MoaA family. In terms of assembly, monomer and homodimer. Requires [4Fe-4S] cluster as cofactor.

It catalyses the reaction GTP + AH2 + S-adenosyl-L-methionine = (8S)-3',8-cyclo-7,8-dihydroguanosine 5'-triphosphate + 5'-deoxyadenosine + L-methionine + A + H(+). It participates in cofactor biosynthesis; molybdopterin biosynthesis. Functionally, catalyzes the cyclization of GTP to (8S)-3',8-cyclo-7,8-dihydroguanosine 5'-triphosphate. In Petrotoga mobilis (strain DSM 10674 / SJ95), this protein is GTP 3',8-cyclase.